Consider the following 448-residue polypeptide: Glutamyl-tRNA reductase (448 aa).

Substrate contacts are provided by residues 49–52, serine 109, 114–116, and glutamine 120; these read TCNR and ETQ. Cysteine 50 serves as the catalytic Nucleophile. 189–194 lines the NADP(+) pocket; sequence GAGEMS.

Belongs to the glutamyl-tRNA reductase family. Homodimer.

The enzyme catalyses (S)-4-amino-5-oxopentanoate + tRNA(Glu) + NADP(+) = L-glutamyl-tRNA(Glu) + NADPH + H(+). The protein operates within porphyrin-containing compound metabolism; protoporphyrin-IX biosynthesis; 5-aminolevulinate from L-glutamyl-tRNA(Glu): step 1/2. In terms of biological role, catalyzes the NADPH-dependent reduction of glutamyl-tRNA(Glu) to glutamate 1-semialdehyde (GSA). The chain is Glutamyl-tRNA reductase from Staphylococcus aureus (strain bovine RF122 / ET3-1).